Consider the following 246-residue polypeptide: Serine protease 1 (246 aa).

Positions 1-17 (MKTFIFLALLGAAVAFP) are cleaved as a signal peptide. The propeptide at 18 to 23 (VDDDDK) is activation peptide. The 221-residue stretch at 24 to 244 (IVGGYTCGAN…YVSWIKQTIA (221 aa)) folds into the Peptidase S1 domain. Intrachain disulfides connect cysteine 30/cysteine 160, cysteine 48/cysteine 64, cysteine 132/cysteine 233, cysteine 139/cysteine 206, cysteine 171/cysteine 185, and cysteine 196/cysteine 220. The active-site Charge relay system is histidine 63. Glutamate 75, asparagine 77, valine 80, and glutamate 85 together coordinate Ca(2+). Catalysis depends on aspartate 107, which acts as the Charge relay system. Residues 194–195 (DS), 197–198 (QG), and serine 200 each bind substrate. Residue serine 200 is the Charge relay system of the active site.

It belongs to the peptidase S1 family. In terms of assembly, interacts with SERPINA1. Requires Ca(2+) as cofactor. Autocatalytic cleavage after Lys-23 leads to beta-trypsin by releasing a terminal hexapeptide. Subsequent cleavage after Lys-148 leads to alpha-trypsin. Further cleavage after Lys-193 yields pseudotrypsin. A cleavage may also occur after Arg-122. Post-translationally, not sulfated on tyrosine residue(s). In terms of tissue distribution, synthesized in the acinar cells of the pancreas.

The protein resides in the secreted. The protein localises to the extracellular space. It carries out the reaction Preferential cleavage: Arg-|-Xaa, Lys-|-Xaa.. Its activity is regulated as follows. Is inhibited by scorpion cyclotide trypsin inhibitor TopI1. The polypeptide is Serine protease 1 (PRSS1) (Bos taurus (Bovine)).